Consider the following 575-residue polypeptide: V-type ATP synthase alpha chain (575 aa).

Residue 238 to 245 (GPFGAGKT) participates in ATP binding.

The protein belongs to the ATPase alpha/beta chains family.

The enzyme catalyses ATP + H2O + 4 H(+)(in) = ADP + phosphate + 5 H(+)(out). Its function is as follows. Produces ATP from ADP in the presence of a proton gradient across the membrane. The V-type alpha chain is a catalytic subunit. The protein is V-type ATP synthase alpha chain of Borreliella burgdorferi (strain ZS7) (Borrelia burgdorferi).